The following is a 246-amino-acid chain: 1-(5-phosphoribosyl)-5-[(5-phosphoribosylamino)methylideneamino] imidazole-4-carboxamide isomerase (246 aa).

The Proton acceptor role is filled by Asp-8. The Proton donor role is filled by Asp-130.

Belongs to the HisA/HisF family.

It localises to the cytoplasm. It carries out the reaction 1-(5-phospho-beta-D-ribosyl)-5-[(5-phospho-beta-D-ribosylamino)methylideneamino]imidazole-4-carboxamide = 5-[(5-phospho-1-deoxy-D-ribulos-1-ylimino)methylamino]-1-(5-phospho-beta-D-ribosyl)imidazole-4-carboxamide. The protein operates within amino-acid biosynthesis; L-histidine biosynthesis; L-histidine from 5-phospho-alpha-D-ribose 1-diphosphate: step 4/9. The protein is 1-(5-phosphoribosyl)-5-[(5-phosphoribosylamino)methylideneamino] imidazole-4-carboxamide isomerase of Shigella dysenteriae serotype 1 (strain Sd197).